Consider the following 347-residue polypeptide: Isopentenyl-diphosphate delta-isomerase (347 aa).

9 to 10 (RK) contributes to the substrate binding site. Residues Ser67, 68-70 (SMT), Ser98, and Asn127 each bind FMN. 98–100 (SQR) contributes to the substrate binding site. Gln162 is a substrate binding site. Glu163 is a Mg(2+) binding site. Residues Lys194, Thr224, 274-276 (GIK), and 295-296 (AA) each bind FMN.

This sequence belongs to the IPP isomerase type 2 family. As to quaternary structure, homooctamer. Dimer of tetramers. FMN serves as cofactor. NADPH is required as a cofactor. The cofactor is Mg(2+).

It is found in the cytoplasm. It catalyses the reaction isopentenyl diphosphate = dimethylallyl diphosphate. Involved in the biosynthesis of isoprenoids. Catalyzes the 1,3-allylic rearrangement of the homoallylic substrate isopentenyl (IPP) to its allylic isomer, dimethylallyl diphosphate (DMAPP). This Pseudescherichia vulneris (Escherichia vulneris) protein is Isopentenyl-diphosphate delta-isomerase.